The primary structure comprises 2184 residues: MGAQVSTQKTGAHETALNAQGNSVIHYTNINYYKDAASNSANRQDFTQDPSKFTEPVKDVMIKSLPALNSPTVEECGYSDRVRSITLGNSTITTQECANVVVAYGVWPDYLHDDEATAEDQPTQPDVATCRFYTLDSVSWQSSSAGWWWKFPDALSNMGLFGQNMQYHYLGRSGYTIHVQCNASKFHQGCLLVVCVPEAEMGCSNLNNAPLAADLSAGEVARQFTVEPANGQNQVQTAVHNAAMGVAVGNLTIFPHQWINLRTNNSATIVMPYINSVPMDNMFRHNNFTLMIIPFAKLAYSDGASTFVPITVTIAPMNAEYNGLRLAGHQGLPVMTTPGSTQFLTSDDFQSPCAMPQFDVTPEMNIPGQVNNLMEIAEVDSVVPVNNTETNVNGMDAYRIPVQSNMDTGGQVFGFPLQPGASSVFQRTLLGEILNYYTHWSGSIKLTFMFCGSAMATGKFLLAYSPPGAGAPKSRKDAMLGTHVIWDVGLQSSCVLCIPWISQTHYRFVVADEYTAGGFITCWYQTNVIVPLGAQSNCSILCFVSACNDFSVRMLRDTKFISQTAFYQSPVEGAIERAIARVADTMPSGPTNSEAVPALTAVETGHTSQVVPSDNMQTRHVKNYHSRSETSVENFLCRSACVYFTTYKNQTGATNRFASWVITTRQVAQLRRKLEMFTYLRFDIELTFVITSAQDQSTISQDAPVQTHQIMYVPPGGPVPTKVDDYAWQTSTNPSVFWTEGNAPPRMSVPFMSIGNAYSTFYDGWSDFSNKGIYGLNTLNNMGTLYIRHVNGPNPVPITSTVRIYFKPKHVKAWVPRPPRLCQYKTSRQVNFTVTGVTESRANITTMNTTGAFGQQSGAAYVGNYRVVNRHLATHADWQNCVWEDYNRDLLVSTTTAHGCDVIARCQCNTGVYFCASRNKHYPVTFEGPGLVEVQESEYYPKRYQSHVLLAAGFSEPGDCGGILRCEHGVIGLVTMGGEGVVGFADVRDLLWLEDDAMEQGVRDYVEQLGNAFGSGFTNQICEQVNLLKESLVGQDSILEKSLKALVKIISALVIVVRNHDDLITVTATLALIGCTTSPWRWLKQKVSQYYGIPMAERQSNGWLKKFTEMTNACKGMEWIAIKIQKFIEWLKARILPEVKEKHEFLNRLKQLPLLESQIATIEQSAPSQSDQEQLFSNVQYFAHYCRKYAPLYAAEAKRVFSLEKKMSNYIQFKSKCRIEPVCLLLHGSPGAGKSVATSLIGRSLAEKLNSSVYSLPPDPDHFDGYKQQAVVIMDDLCQNPDGKDVSLFCQMVSSVDFVPPMAALEEKGILFTSPFVLASTNAGSINAPTVSDSRALARRFHFDMNIEVISMYSQNGKINMPMSVKTCDEECCPVNFKKCCPLVCGKAIQFIDRRTQVRYSLDMLVTEMFREYNHRHSVGATLEALFQGPPVYREIKISVAPETPPPPAIADLLKSVDSEAVREYCKEKGWLVPEINSTLQIEKHVSRAFICLQALTTFVSVAGIIYIIYKLFAGFQGAYTGMPNQKPKVPTLRQAKVQGPAFEFAVAMMKRNSSTVKTEYGEFTMLGVYDRWAVLPRHAKPGPTILMNDQEVGVLDAKELVDKDGTNLELTLLKLNRNEKFRDIRGFLAKEEVEVNEAVLAINTSKFPNMYIPVGQVTDYGFLNLGGTPTKRMLMYNFPTRAGQCGGVLMSTGKVLGIHVGGNGHQGFSAALLKHYFNDEQGEIEFIESSKDAGFPIINTPSKTKLEPSVFHQVFEGNKEPAVLRNGDPRLKANFEEAIFSKYIGNVNTHVDEYMLEAVDHYAGQLATLDINTEPMKLEDAVYGTEGLEALDLTTSAGYPYVALGIKKRDILSKKSKDLTKLKECMDKYGLNLPMVTYVKDELRSAEKVAKGKSRLIEASSLNDSVAMRQTFGNLYKTFHLNPGIVTGSAVGCDPDLFWSKIPVMLDGHLIAFDYSGYDASLSPVWFACLKLLLEKLGYTHKETNYIDYLCNSHHLYRDKHYFVRGGMPSGCSGTSIFNSMINNIIIRTLMLKVYKGIDLDQFRMIAYGDDVIASYPWPIDASLLAEAGKGYGLIMTPADKGECFNEVTWTNVTFLKRYFRADEQYPFLVHPVMPMKDIHESIRWTKDPKNTQDHVRSLCLLAWHNGEHEYEEFIRKVRSVPVGRCLTLPAFSTLRRKWLDSF.

Glycine 2 carries the N-myristoyl glycine; by host lipid modification. Topologically, residues 2–1494 are cytoplasmic; the sequence is GAQVSTQKTG…HVSRAFICLQ (1493 aa). Residues 566–582 form an amphipathic alpha-helix region; that stretch reads FYQSPVEGAIERAIARV. Active-site for protease 2A activity residues include histidine 871 and aspartate 889. Positions 906 and 908 each coordinate Zn(2+). The For protease 2A activity role is filled by cysteine 960. Positions 966 and 968 each coordinate Zn(2+). Residues 1100–1172 are membrane-binding; the sequence is SNGWLKKFTE…EQSAPSQSDQ (73 aa). The oligomerization stretch occupies residues 1100–1238; it reads SNGWLKKFTE…SPGAGKSVAT (139 aa). The segment at 1121–1125 is RNA-binding; sequence AIKIQ. Residues 1204–1360 form the SF3 helicase domain; that stretch reads EKKMSNYIQF…SMYSQNGKIN (157 aa). Residues cysteine 1368, cysteine 1380, and cysteine 1385 each contribute to the Zn(2+) site. The segment at 1368–1385 adopts a C4-type; degenerate zinc-finger fold; the sequence is CDEECCPVNFKKCCPLVC. The interval 1412–1419 is RNA-binding; the sequence is EYNHRHSV. Positions 1423-1428 are oligomerization; the sequence is LEALFQ. The stretch at 1495 to 1510 is an intramembrane region; the sequence is ALTTFVSVAGIIYIIY. Residues 1511–2184 lie on the Cytoplasmic side of the membrane; that stretch reads KLFAGFQGAY…TLRRKWLDSF (674 aa). The residue at position 1520 (tyrosine 1520) is an O-(5'-phospho-RNA)-tyrosine. The Peptidase C3 domain occupies 1540-1718; sequence GPAFEFAVAM…FSAALLKHYF (179 aa). Catalysis depends on for protease 3C activity residues histidine 1579, glutamate 1610, and cysteine 1686. A RdRp catalytic domain is found at 1949–2065; the sequence is GHLIAFDYSG…SYPWPIDASL (117 aa). Residues aspartate 1955 and aspartate 2051 each coordinate Mg(2+).

This sequence belongs to the picornaviruses polyprotein family. Interacts with capsid protein VP1 and capsid protein VP3 to form heterotrimeric protomers. As to quaternary structure, interacts with capsid protein VP0, and capsid protein VP3 to form heterotrimeric protomers. Five protomers subsequently associate to form pentamers which serve as building blocks for the capsid. Interacts with capsid protein VP2, capsid protein VP3 and capsid protein VP4 following cleavage of capsid protein VP0. Interacts with host CXADR. In terms of assembly, interacts with capsid protein VP1 and capsid protein VP3 in the mature capsid. Interacts with capsid protein VP0 and capsid protein VP1 to form heterotrimeric protomers. Five protomers subsequently associate to form pentamers which serve as building blocks for the capsid. Interacts with capsid protein VP4 in the mature capsid. Interacts with protein 2C; this interaction may be important for virion morphogenesis. As to quaternary structure, interacts with capsid protein VP1 and capsid protein VP3. In terms of assembly, homodimer. Homohexamer; forms a hexameric ring structure with 6-fold symmetry characteristic of AAA+ ATPases. Interacts (via N-terminus) with host RTN3 (via reticulon domain); this interaction is important for viral replication. Interacts with capsid protein VP3; this interaction may be important for virion morphogenesis. As to quaternary structure, interacts with protein 3CD. In terms of assembly, homodimer. Interacts with host GBF1. Interacts (via GOLD domain) with host ACBD3 (via GOLD domain); this interaction allows the formation of a viral protein 3A/ACBD3 heterotetramer with a 2:2 stoichiometry, which will stimulate the recruitment of host PI4KB in order to synthesize PI4P at the viral RNA replication sites. Interacts with RNA-directed RNA polymerase. As to quaternary structure, interacts with protein 3AB and with RNA-directed RNA polymerase. In terms of assembly, interacts with Viral protein genome-linked and with protein 3CD. Mg(2+) serves as cofactor. Post-translationally, specific enzymatic cleavages in vivo by the viral proteases yield processing intermediates and the mature proteins. In terms of processing, myristoylation is required for the formation of pentamers during virus assembly. Further assembly of 12 pentamers and a molecule of genomic RNA generates the provirion. During virion maturation, immature virions are rendered infectious following cleavage of VP0 into VP4 and VP2. This maturation seems to be an autocatalytic event triggered by the presence of RNA in the capsid and it is followed by a conformational change infectious virion. Post-translationally, myristoylation is required during RNA encapsidation and formation of the mature virus particle. In terms of processing, VPg is uridylylated by the polymerase into VPg-pUpU. This acts as a nucleotide-peptide primer for the genomic RNA replication.

It is found in the virion. Its subcellular location is the host cytoplasm. The protein localises to the host cytoplasmic vesicle membrane. The protein resides in the host nucleus. It catalyses the reaction a ribonucleoside 5'-triphosphate + H2O = a ribonucleoside 5'-diphosphate + phosphate + H(+). The catalysed reaction is Selective cleavage of Tyr-|-Gly bond in the picornavirus polyprotein.. It carries out the reaction RNA(n) + a ribonucleoside 5'-triphosphate = RNA(n+1) + diphosphate. The enzyme catalyses Selective cleavage of Gln-|-Gly bond in the poliovirus polyprotein. In other picornavirus reactions Glu may be substituted for Gln, and Ser or Thr for Gly.. With respect to regulation, replication or transcription is subject to high level of random mutations by the nucleotide analog ribavirin. In terms of biological role, forms an icosahedral capsid of pseudo T=3 symmetry with capsid proteins VP2 and VP3. The capsid is 300 Angstroms in diameter, composed of 60 copies of each capsid protein and enclosing the viral positive strand RNA genome. Capsid protein VP1 mainly forms the vertices of the capsid. Capsid protein VP1 interacts with host CXADR to provide virion attachment to target host cells. This attachment induces virion internalization. Tyrosine kinases are probably involved in the entry process. After binding to its receptor, the capsid undergoes conformational changes. Capsid protein VP1 N-terminus (that contains an amphipathic alpha-helix) and capsid protein VP4 are externalized. Together, they shape a pore in the host membrane through which viral genome is translocated to host cell cytoplasm. Functionally, forms an icosahedral capsid of pseudo T=3 symmetry with capsid proteins VP2 and VP3. The capsid is 300 Angstroms in diameter, composed of 60 copies of each capsid protein and enclosing the viral positive strand RNA genome. Its function is as follows. Lies on the inner surface of the capsid shell. After binding to the host receptor, the capsid undergoes conformational changes. Capsid protein VP4 is released, Capsid protein VP1 N-terminus is externalized, and together, they shape a pore in the host membrane through which the viral genome is translocated into the host cell cytoplasm. Component of immature procapsids, which is cleaved into capsid proteins VP4 and VP2 after maturation. Allows the capsid to remain inactive before the maturation step. In terms of biological role, cysteine protease that cleaves viral polyprotein and specific host proteins. It is responsible for the autocatalytic cleavage between the P1 and P2 regions, which is the first cleavage occurring in the polyprotein. Also cleaves the host translation initiation factor EIF4G1, in order to shut down the capped cellular mRNA translation. Inhibits the host nucleus-cytoplasm protein and RNA trafficking by cleaving host members of the nuclear pores. Counteracts stress granule formation probably by antagonizing its assembly or promoting its dissassembly. Cleaves and inhibits host IFIH1/MDA5, thereby inhibiting the type-I IFN production and the establishment of the antiviral state. Cleaves and inhibits host MAVS, thereby inhibiting the type-I IFN production and the establishment of the antiviral state. Functionally, plays an essential role in the virus replication cycle by acting as a viroporin. Creates a pore in the host endoplasmic reticulum and as a consequence releases Ca2+ in the cytoplasm of infected cell. In turn, high levels of cytoplasmic calcium may trigger membrane trafficking and transport of viral ER-associated proteins to viroplasms, sites of viral genome replication. Its function is as follows. Induces and associates with structural rearrangements of intracellular membranes. Displays RNA-binding, nucleotide binding and NTPase activities. May play a role in virion morphogenesis and viral RNA encapsidation by interacting with the capsid protein VP3. Localizes the viral replication complex to the surface of membranous vesicles. Together with protein 3CD binds the Cis-Active RNA Element (CRE) which is involved in RNA synthesis initiation. Acts as a cofactor to stimulate the activity of 3D polymerase, maybe through a nucleid acid chaperone activity. In terms of biological role, localizes the viral replication complex to the surface of membranous vesicles. It inhibits host cell endoplasmic reticulum-to-Golgi apparatus transport and causes the disassembly of the Golgi complex, possibly through GBF1 interaction. This would result in depletion of MHC, trail receptors and IFN receptors at the host cell surface. Plays an essential role in viral RNA replication by recruiting ACBD3 and PI4KB at the viral replication sites, thereby allowing the formation of the rearranged membranous structures where viral replication takes place. Functionally, acts as a primer for viral RNA replication and remains covalently bound to viral genomic RNA. VPg is uridylylated prior to priming replication into VPg-pUpU. The oriI viral genomic sequence may act as a template for this. The VPg-pUpU is then used as primer on the genomic RNA poly(A) by the RNA-dependent RNA polymerase to replicate the viral genome. During genome replication, the VPg-RNA linkage is removed by the host TDP2, thereby accelerating replication. During the late stage of the replication cycle, host TDP2 is excluded from sites of viral RNA synthesis and encapsidation, allowing for the generation of progeny virions. Its function is as follows. Involved in the viral replication complex and viral polypeptide maturation. It exhibits protease activity with a specificity and catalytic efficiency that is different from protease 3C. Protein 3CD lacks polymerase activity. Protein 3CD binds to the 5'UTR of the viral genome. Replicates the viral genomic RNA on the surface of intracellular membranes. May form linear arrays of subunits that propagate along a strong head-to-tail interaction called interface-I. Covalently attaches UMP to a tyrosine of VPg, which is used to prime RNA synthesis. The positive stranded RNA genome is first replicated at virus induced membranous vesicles, creating a dsRNA genomic replication form. This dsRNA is then used as template to synthesize positive stranded RNA genomes. ss(+)RNA genomes are either translated, replicated or encapsidated. In terms of biological role, major viral protease that mediates proteolytic processing of the polyprotein. Cleaves host EIF5B, contributing to host translation shutoff. Also cleaves host PABPC1, contributing to host translation shutoff. Cleaves host NLRP1, triggers host N-glycine-mediated degradation of the autoinhibitory NLRP1 N-terminal fragment. This chain is Genome polyprotein, found in Coxsackievirus B6 (strain Schmitt).